Consider the following 457-residue polypeptide: Secreted RxLR effector protein 8 (457 aa).

An N-terminal signal peptide occupies residues 1–19 (MRGTLATALLLVISSRVAT). Residues 48 to 69 (RFLRGSRKQRDDLAPTAADENR) carry the RxLR-dEER motif. Residue Asn68 is glycosylated (N-linked (GlcNAc...) asparagine). Disordered regions lie at residues 110-188 (RLSL…ALKS) and 398-457 (RQTI…RSSS). A compositionally biased stretch (low complexity) spans 135-152 (SASTSTTSDIATSSSRTS). 2 stretches are compositionally biased toward polar residues: residues 153–163 (NQRTPKTQASL) and 176–187 (SKNQFKKSTALK). Basic residues predominate over residues 442–457 (IKSKDHARKKRPRSSS).

This sequence belongs to the RxLR effector family.

Its subcellular location is the secreted. The protein resides in the host nucleus. Its function is as follows. Secreted effector that completely suppresses the host cell death induced by cell death-inducing proteins. This chain is Secreted RxLR effector protein 8, found in Plasmopara viticola (Downy mildew of grapevine).